Consider the following 295-residue polypeptide: GTPase Era (295 aa).

The 168-residue stretch at 3–170 (KSGFVTIVGR…VDLMKTELPE (168 aa)) folds into the Era-type G domain. A G1 region spans residues 11–18 (GRPNVGKS). 11-18 (GRPNVGKS) contacts GTP. The G2 stretch occupies residues 37–41 (QTTRN). The G3 stretch occupies residues 58–61 (DTPG). Residues 58-62 (DTPGI) and 120-123 (NKID) contribute to the GTP site. The interval 120 to 123 (NKID) is G4. The interval 149–151 (IAA) is G5. Residues 201 to 278 (LRDEVPHGIA…NVKIWVKVRK (78 aa)) form the KH type-2 domain.

The protein belongs to the TRAFAC class TrmE-Era-EngA-EngB-Septin-like GTPase superfamily. Era GTPase family. Monomer.

Its subcellular location is the cytoplasm. It is found in the cell membrane. Functionally, an essential GTPase that binds both GDP and GTP, with rapid nucleotide exchange. Plays a role in 16S rRNA processing and 30S ribosomal subunit biogenesis and possibly also in cell cycle regulation and energy metabolism. The polypeptide is GTPase Era (Clostridium botulinum (strain Alaska E43 / Type E3)).